We begin with the raw amino-acid sequence, 189 residues long: Elongation factor P 2 (189 aa).

The protein belongs to the elongation factor P family.

It localises to the cytoplasm. It participates in protein biosynthesis; polypeptide chain elongation. Involved in peptide bond synthesis. Stimulates efficient translation and peptide-bond synthesis on native or reconstituted 70S ribosomes in vitro. Probably functions indirectly by altering the affinity of the ribosome for aminoacyl-tRNA, thus increasing their reactivity as acceptors for peptidyl transferase. This is Elongation factor P 2 from Mesorhizobium japonicum (strain LMG 29417 / CECT 9101 / MAFF 303099) (Mesorhizobium loti (strain MAFF 303099)).